Consider the following 502-residue polypeptide: Probable cytosol aminopeptidase (502 aa).

The Mn(2+) site is built by lysine 269 and aspartate 274. The active site involves lysine 281. Residues aspartate 292, aspartate 351, and glutamate 353 each contribute to the Mn(2+) site. Residue arginine 355 is part of the active site.

The protein belongs to the peptidase M17 family. It depends on Mn(2+) as a cofactor.

It localises to the cytoplasm. It catalyses the reaction Release of an N-terminal amino acid, Xaa-|-Yaa-, in which Xaa is preferably Leu, but may be other amino acids including Pro although not Arg or Lys, and Yaa may be Pro. Amino acid amides and methyl esters are also readily hydrolyzed, but rates on arylamides are exceedingly low.. The catalysed reaction is Release of an N-terminal amino acid, preferentially leucine, but not glutamic or aspartic acids.. Its function is as follows. Presumably involved in the processing and regular turnover of intracellular proteins. Catalyzes the removal of unsubstituted N-terminal amino acids from various peptides. The polypeptide is Probable cytosol aminopeptidase (Shewanella loihica (strain ATCC BAA-1088 / PV-4)).